The following is a 277-amino-acid chain: Inner kinetochore subunit sim4 (277 aa).

The stretch at 96–138 forms a coiled coil; it reads NNISDLKKNLHSNKKLEAVLKEELHQIKKFSSDLQSLKSSMGE.

This sequence belongs to the CENP-K/MCM22 family. Component of the inner kinetochore constitutive centromere-associated network (CCAN) (also known as central kinetochore Sim4 complex in fission yeast), which is composed of at least cnl2, cnp3, cnp20, fta1, fta2, fta3, fta4, fta6, fta7, mal2, mhf1, mhf2, mis6, mis15, mis17, sim4 and wip1. Interacts with mis6 and dad1.

The protein resides in the nucleus. It localises to the chromosome. It is found in the centromere. Its function is as follows. Component of the kinetochore, a multiprotein complex that assembles on centromeric DNA and attaches chromosomes to spindle microtubules, mediating chromosome segregation and sister chromatid segregation during meiosis and mitosis. Component of the inner kinetochore constitutive centromere-associated network (CCAN), which serves as a structural platform for outer kinetochore assembly. This Schizosaccharomyces pombe (strain 972 / ATCC 24843) (Fission yeast) protein is Inner kinetochore subunit sim4 (sim4).